The following is a 175-amino-acid chain: Inosine/xanthosine triphosphatase (175 aa).

8–13 (TTNPAK) provides a ligand contact to substrate. Residues Asp38 and Glu68 each coordinate Mg(2+). Residue 68–69 (EA) coordinates substrate.

The protein belongs to the YjjX NTPase family. Homodimer. It depends on Mg(2+) as a cofactor. The cofactor is Mn(2+).

The enzyme catalyses XTP + H2O = XDP + phosphate + H(+). The catalysed reaction is ITP + H2O = IDP + phosphate + H(+). Its function is as follows. Phosphatase that hydrolyzes non-canonical purine nucleotides such as XTP and ITP to their respective diphosphate derivatives. Probably excludes non-canonical purines from DNA/RNA precursor pool, thus preventing their incorporation into DNA/RNA and avoiding chromosomal lesions. The protein is Inosine/xanthosine triphosphatase of Yersinia enterocolitica serotype O:8 / biotype 1B (strain NCTC 13174 / 8081).